Consider the following 206-residue polypeptide: ATP phosphoribosyltransferase (206 aa).

It belongs to the ATP phosphoribosyltransferase family. Short subfamily. In terms of assembly, heteromultimer composed of HisG and HisZ subunits.

Its subcellular location is the cytoplasm. The catalysed reaction is 1-(5-phospho-beta-D-ribosyl)-ATP + diphosphate = 5-phospho-alpha-D-ribose 1-diphosphate + ATP. The protein operates within amino-acid biosynthesis; L-histidine biosynthesis; L-histidine from 5-phospho-alpha-D-ribose 1-diphosphate: step 1/9. Its function is as follows. Catalyzes the condensation of ATP and 5-phosphoribose 1-diphosphate to form N'-(5'-phosphoribosyl)-ATP (PR-ATP). Has a crucial role in the pathway because the rate of histidine biosynthesis seems to be controlled primarily by regulation of HisG enzymatic activity. In Thermus thermophilus (strain ATCC 27634 / DSM 579 / HB8), this protein is ATP phosphoribosyltransferase.